A 691-amino-acid chain; its full sequence is DNA ligase (691 aa).

Residues 41–45 (DAEYD), 90–91 (SL), and glutamate 130 contribute to the NAD(+) site. Lysine 132 acts as the N6-AMP-lysine intermediate in catalysis. NAD(+)-binding residues include arginine 153, glutamate 190, lysine 307, and lysine 331. Zn(2+) contacts are provided by cysteine 425, cysteine 428, cysteine 443, and cysteine 449. The BRCT domain maps to 610–691 (APQGVLAGKT…LHQLLEGNTP (82 aa)).

It belongs to the NAD-dependent DNA ligase family. LigA subfamily. Mg(2+) serves as cofactor. Requires Mn(2+) as cofactor.

The catalysed reaction is NAD(+) + (deoxyribonucleotide)n-3'-hydroxyl + 5'-phospho-(deoxyribonucleotide)m = (deoxyribonucleotide)n+m + AMP + beta-nicotinamide D-nucleotide.. Its function is as follows. DNA ligase that catalyzes the formation of phosphodiester linkages between 5'-phosphoryl and 3'-hydroxyl groups in double-stranded DNA using NAD as a coenzyme and as the energy source for the reaction. It is essential for DNA replication and repair of damaged DNA. This chain is DNA ligase, found in Burkholderia cenocepacia (strain HI2424).